The primary structure comprises 135 residues: uncharacterized protein (135 aa).

Positions 1 to 70 are disordered; the sequence is MKPDWPRRGA…RWRPQGTGTG (70 aa).

This is an uncharacterized protein from Homo sapiens (Human).